A 483-amino-acid polypeptide reads, in one-letter code: Myosin-binding protein H (483 aa).

Over residues 1 to 15 (MTGKATSEASVSTPE) the composition is skewed to polar residues. Positions 1–78 (MTGKATSEAS…PEPPSEDVPS (78 aa)) are disordered. Thr2, Thr6, and Thr26 each carry phosphothreonine. The segment covering 41 to 66 (QEQAPEPQKPQAQDPAAPAASAMPAA) has biased composition (low complexity). The Fibronectin type-III 1 domain maps to 79-174 (APLRLTLEDV…LDQPVHIQEI (96 aa)). The region spanning 178–266 (PKIRVPRHLR…EGLEAKASID (89 aa)) is the Ig-like C2-type 1 domain. Residues 275–370 (PPSSIKLLDV…TKELAHIHKA (96 aa)) form the Fibronectin type-III 2 domain. The Ig-like C2-type 2 domain occupies 388-472 (PSFTQPLADH…INVLGEASVD (85 aa)).

This sequence belongs to the immunoglobulin superfamily. MyBP family. As to expression, skeletal muscle. Expressed at low levels in heart ventricles.

Functionally, binds to myosin; probably involved in interaction with thick myofilaments in the A-band. The sequence is that of Myosin-binding protein H (Mybph) from Mus musculus (Mouse).